A 298-amino-acid polypeptide reads, in one-letter code: Probable GTP 3',8-cyclase (298 aa).

The 224-residue stretch at R4–D227 folds into the Radical SAM core domain. R13 contributes to the GTP binding site. Residues C20 and C24 each contribute to the [4Fe-4S] cluster site. Residue Y26 coordinates S-adenosyl-L-methionine. C27 is a binding site for [4Fe-4S] cluster. Residue K61 participates in GTP binding. An S-adenosyl-L-methionine-binding site is contributed by G65. T91 contacts GTP. S-adenosyl-L-methionine is bound at residue S115. Residue K152 coordinates GTP. [4Fe-4S] cluster is bound by residues C243 and C246. GTP is bound at residue R248 to R250. [4Fe-4S] cluster is bound at residue C260.

This sequence belongs to the radical SAM superfamily. MoaA family. Requires [4Fe-4S] cluster as cofactor.

The enzyme catalyses GTP + AH2 + S-adenosyl-L-methionine = (8S)-3',8-cyclo-7,8-dihydroguanosine 5'-triphosphate + 5'-deoxyadenosine + L-methionine + A + H(+). Its pathway is cofactor biosynthesis; molybdopterin biosynthesis. In terms of biological role, catalyzes the cyclization of GTP to (8S)-3',8-cyclo-7,8-dihydroguanosine 5'-triphosphate. The protein is Probable GTP 3',8-cyclase of Methanococcus maripaludis (strain C6 / ATCC BAA-1332).